Here is a 276-residue protein sequence, read N- to C-terminus: Phosphatidylglycerol--prolipoprotein diacylglyceryl transferase (276 aa).

3 helical membrane-spanning segments follow: residues L17–A37, I63–Y83, and I95–S115. R146 contributes to the a 1,2-diacyl-sn-glycero-3-phospho-(1'-sn-glycerol) binding site. 3 helical membrane-spanning segments follow: residues S182 to A202, G209 to F229, and F235 to V255.

This sequence belongs to the Lgt family.

The protein localises to the cell inner membrane. It carries out the reaction L-cysteinyl-[prolipoprotein] + a 1,2-diacyl-sn-glycero-3-phospho-(1'-sn-glycerol) = an S-1,2-diacyl-sn-glyceryl-L-cysteinyl-[prolipoprotein] + sn-glycerol 1-phosphate + H(+). The protein operates within protein modification; lipoprotein biosynthesis (diacylglyceryl transfer). Catalyzes the transfer of the diacylglyceryl group from phosphatidylglycerol to the sulfhydryl group of the N-terminal cysteine of a prolipoprotein, the first step in the formation of mature lipoproteins. The chain is Phosphatidylglycerol--prolipoprotein diacylglyceryl transferase from Polaromonas sp. (strain JS666 / ATCC BAA-500).